The sequence spans 378 residues: Dual-specificity RNA methyltransferase RlmN (378 aa).

The active-site Proton acceptor is E97. One can recognise a Radical SAM core domain in the interval 103-341 (EGDRATLCVS…VMVRKTRGDD (239 aa)). C110 and C346 are joined by a disulfide. Residues C117, C121, and C124 each coordinate [4Fe-4S] cluster. S-adenosyl-L-methionine is bound by residues 171-172 (GE), S203, 225-227 (SLH), and N303. C346 (S-methylcysteine intermediate) is an active-site residue.

This sequence belongs to the radical SAM superfamily. RlmN family. Requires [4Fe-4S] cluster as cofactor.

The protein localises to the cytoplasm. It catalyses the reaction adenosine(2503) in 23S rRNA + 2 reduced [2Fe-2S]-[ferredoxin] + 2 S-adenosyl-L-methionine = 2-methyladenosine(2503) in 23S rRNA + 5'-deoxyadenosine + L-methionine + 2 oxidized [2Fe-2S]-[ferredoxin] + S-adenosyl-L-homocysteine. The enzyme catalyses adenosine(37) in tRNA + 2 reduced [2Fe-2S]-[ferredoxin] + 2 S-adenosyl-L-methionine = 2-methyladenosine(37) in tRNA + 5'-deoxyadenosine + L-methionine + 2 oxidized [2Fe-2S]-[ferredoxin] + S-adenosyl-L-homocysteine. Functionally, specifically methylates position 2 of adenine 2503 in 23S rRNA and position 2 of adenine 37 in tRNAs. m2A2503 modification seems to play a crucial role in the proofreading step occurring at the peptidyl transferase center and thus would serve to optimize ribosomal fidelity. The sequence is that of Dual-specificity RNA methyltransferase RlmN from Idiomarina loihiensis (strain ATCC BAA-735 / DSM 15497 / L2-TR).